The chain runs to 454 residues: GTPase Der (454 aa).

2 EngA-type G domains span residues 4–167 (AIVA…SEDK) and 188–363 (LELA…ASWQ). GTP contacts are provided by residues 10–17 (GKPNVGKS), 56–60 (DTPGL), 121–124 (NKTE), 194–201 (GRPNCGKS), 241–245 (DTAGV), and 306–309 (NKWD). A KH-like domain is found at 364–450 (KRVTTGTLNQ…PVRLSFVKGK (87 aa)).

This sequence belongs to the TRAFAC class TrmE-Era-EngA-EngB-Septin-like GTPase superfamily. EngA (Der) GTPase family. As to quaternary structure, associates with the 50S ribosomal subunit.

In terms of biological role, GTPase that plays an essential role in the late steps of ribosome biogenesis. The protein is GTPase Der of Orientia tsutsugamushi (strain Ikeda) (Rickettsia tsutsugamushi).